We begin with the raw amino-acid sequence, 241 residues long: Glucosamine-6-phosphate deaminase (241 aa).

The Proton acceptor; for enolization step role is filled by D67. The active-site For ring-opening step is the N136. H138 acts as the Proton acceptor; for ring-opening step in catalysis. The active-site For ring-opening step is the E143.

It belongs to the glucosamine/galactosamine-6-phosphate isomerase family. NagB subfamily.

The enzyme catalyses alpha-D-glucosamine 6-phosphate + H2O = beta-D-fructose 6-phosphate + NH4(+). It participates in amino-sugar metabolism; N-acetylneuraminate degradation; D-fructose 6-phosphate from N-acetylneuraminate: step 5/5. Its function is as follows. Catalyzes the reversible isomerization-deamination of glucosamine 6-phosphate (GlcN6P) to form fructose 6-phosphate (Fru6P) and ammonium ion. The protein is Glucosamine-6-phosphate deaminase of Clostridium novyi (strain NT).